Here is a 565-residue protein sequence, read N- to C-terminus: NAD-dependent malic enzyme (565 aa).

The Proton donor role is filled by Tyr104. Arg157 contributes to the NAD(+) binding site. The active-site Proton acceptor is the Lys175. Positions 246, 247, and 270 each coordinate a divalent metal cation. NAD(+)-binding residues include Asp270 and Asn418.

The protein belongs to the malic enzymes family. In terms of assembly, homotetramer. Mg(2+) is required as a cofactor. Mn(2+) serves as cofactor.

The catalysed reaction is (S)-malate + NAD(+) = pyruvate + CO2 + NADH. It catalyses the reaction oxaloacetate + H(+) = pyruvate + CO2. The polypeptide is NAD-dependent malic enzyme (Escherichia coli O6:H1 (strain CFT073 / ATCC 700928 / UPEC)).